A 480-amino-acid polypeptide reads, in one-letter code: Uridine 5'-monophosphate synthase (480 aa).

Position 2 is an N-acetylalanine (A2). The segment at 2–214 (AAVGAALGPL…VFVAANHNGS (213 aa)) is OPRTase. Phosphotyrosine is present on Y37. S214 is modified (phosphoserine). The interval 215-220 (PLSIKE) is domain linker. The OMPdecase stretch occupies residues 221 to 480 (APKELSFSAR…WEAYLSRLGV (260 aa)). S257 lines the orotidine 5'-phosphate pocket. UMP is bound by residues S257, D259, and 281–283 (KTH). Residues K281, K314, D317, T321, S372, 430–432 (QQY), and 450–451 (GR) each bind orotidine 5'-phosphate. Catalysis depends on for OMPdecase activity residues K314 and D317. UMP is bound by residues D317, T321, S372, 430–432 (QQY), and 450–451 (GR).

It in the N-terminal section; belongs to the purine/pyrimidine phosphoribosyltransferase family. This sequence in the C-terminal section; belongs to the OMP decarboxylase family. Homodimer; dimerization is required for enzymatic activity.

The enzyme catalyses orotidine 5'-phosphate + diphosphate = orotate + 5-phospho-alpha-D-ribose 1-diphosphate. It carries out the reaction orotidine 5'-phosphate + H(+) = UMP + CO2. The protein operates within pyrimidine metabolism; UMP biosynthesis via de novo pathway; UMP from orotate: step 1/2. It participates in pyrimidine metabolism; UMP biosynthesis via de novo pathway; UMP from orotate: step 2/2. In terms of biological role, bifunctional enzyme catalyzing the last two steps of de novo pyrimidine biosynthesis, orotate phosphoribosyltransferase (OPRT), which converts orotate to orotidine-5'-monophosphate (OMP), and orotidine-5'-monophosphate decarboxylase (ODC), the terminal enzymatic reaction that decarboxylates OMP to uridine monophosphate (UMP). This Pongo abelii (Sumatran orangutan) protein is Uridine 5'-monophosphate synthase (UMPS).